The primary structure comprises 269 residues: Histone deacetylase HDT1 (269 aa).

Residues Pro-97–Lys-269 form a disordered region. 2 stretches are compositionally biased toward acidic residues: residues Phe-98–Ile-115 and Lys-153–Glu-179. Residues Pro-228–Ser-238 show a composition bias toward polar residues. The C2H2-type zinc-finger motif lies at His-242 to His-265.

The protein belongs to the histone deacetylase HD2 family. Predominantly expressed in ovaries. Accumulates predominantly in the micropylar region of the ovule's integument.

The protein resides in the nucleus. It is found in the nucleolus. Its function is as follows. Mediates the deacetylation of lysine residues on the N-terminal part of the core histones (H2A, H2B, H3 and H4). Histone deacetylation gives a tag for epigenetic repression and plays an important role in transcriptional regulation, cell cycle progression and developmental events. The chain is Histone deacetylase HDT1 (HDT1) from Solanum chacoense (Chaco potato).